Here is a 189-residue protein sequence, read N- to C-terminus: Protein shisa-like-2A (189 aa).

The next 2 helical transmembrane spans lie at 48-68 (SFFP…LVGL) and 70-90 (TAAV…YLFI). The disordered stretch occupies residues 98-189 (LDPGLSLQTT…PTPGPHGPVP (92 aa)). A compositionally biased stretch (polar residues) spans 140–171 (NTHLESNKKQTVSPTCLPQNQFMATVTASNIP).

The protein belongs to the shisa family.

The protein resides in the membrane. The protein is Protein shisa-like-2A (Shisal2a) of Mus musculus (Mouse).